The sequence spans 357 residues: Cinnamyl alcohol dehydrogenase 5 (357 aa).

Cys-47 contributes to the Zn(2+) binding site. Thr-49 contributes to the NADP(+) binding site. Residues His-69, Glu-70, Cys-100, Cys-103, Cys-106, Cys-114, and Cys-163 each coordinate Zn(2+). NADP(+)-binding positions include Thr-167, 188-193 (GLGGVG), 211-216 (SSSNKK), Thr-251, Gly-275, and 298-300 (SFI).

The protein belongs to the zinc-containing alcohol dehydrogenase family. Homodimer. Zn(2+) serves as cofactor. As to expression, expressed at the lateral root initiation sites, in the vascular tissues of the primary lateral root and the root caps. Expressed in the hypocotyl, cotyledon and leaf veins, apical meristem region, at the base of the trichomes, hydathodes and cauline leaves. In stems, expressed in the cells associated with the vascular cambium, interfascicular cambium and the developing xylem. Expressed in the vascular strand of petals and sepals, anthers, stamen filaments, stigma in flowers, and abscission, style and stigmatic regions of siliques.

The enzyme catalyses (E)-cinnamyl alcohol + NADP(+) = (E)-cinnamaldehyde + NADPH + H(+). The catalysed reaction is (E)-coniferol + NADP(+) = (E)-coniferaldehyde + NADPH + H(+). It carries out the reaction (E)-sinapyl alcohol + NADP(+) = (E)-sinapaldehyde + NADPH + H(+). It catalyses the reaction (E)-4-coumaroyl alcohol + NADP(+) = (E)-4-coumaraldehyde + NADPH + H(+). The enzyme catalyses (E)-caffeyl alcohol + NADP(+) = (E)-caffeyl aldehyde + NADPH + H(+). It participates in aromatic compound metabolism; phenylpropanoid biosynthesis. Functionally, involved in lignin biosynthesis in the floral stem. Catalyzes the final step specific for the production of lignin monomers. Catalyzes the NADPH-dependent reduction of coniferaldehyde, 5-hydroxyconiferaldehyde, sinapaldehyde, 4-coumaraldehyde and caffeyl aldehyde to their respective alcohols. The sequence is that of Cinnamyl alcohol dehydrogenase 5 from Arabidopsis thaliana (Mouse-ear cress).